A 296-amino-acid chain; its full sequence is Polyadenylate-binding protein 2-A (296 aa).

Positions 1 to 106 are disordered; sequence MAAVSSVASL…GELTGDQTIE (106 aa). Residues 71 to 82 are compositionally biased toward gly residues; it reads GRGGSGGGGAGG. Acidic residues predominate over residues 84–97; the sequence is EELEDEELEEEEPG. Residues 107–141 are a coiled coil; sequence DPELEAIKARVREMEEEAEKLKELQNEVEKQMNMS. The tract at residues 146-296 is necessary for homooligomerization; the sequence is NAGPVIMSVE…ARATSWYTPY (151 aa). Residues 163 to 240 enclose the RRM domain; it reads RSIYVGNVDY…RQIKVVPKRT (78 aa).

As to quaternary structure, monomer and homooligomer. Binds RNA as a monomer and oligomerizes when bound to poly(A). As to expression, shows dynamic spatial expression throughout development. First expressed in the animal pole region of the egg and this pattern persists through to the blastula stage. In gastrula and neurula embryos, expressed mainly in ectodermal, neural and epidermal regions. Neural tissue-specific expression pattern persists into tailbud stage when expression is localized to the brain and spinal cord. At early tadpole stage, expression becomes gradually confined to the specific vesicle regions of the developing brain. At stage 39, expressed in the telencephalon and mesencephalon regions of the brain. Also detected in the eye and olfactory pit at the tadpole stage. Expressed during gut endoderm development. At stage 35, expressed exclusively in the anterior portion of the gut endoderm, which includes the prospective liver, stomach and pancreas. As development proceeds, expression becomes restricted to the pancreas, and by stage 46/47 (the seventh day of development) expression is localized exclusively to the pancreas. Expressed in most adult tissues.

Its subcellular location is the nucleus. The protein localises to the cytoplasm. In terms of biological role, involved in the 3'-end formation of mRNA precursors (pre-mRNA) by the addition of a poly(A) tail of 200-250 nt to the upstream cleavage product. Stimulates poly(A) polymerase (PAPOLA) conferring processivity on the poly(A) tail elongation reaction and also controls the poly(A) tail length. Increases the affinity of poly(A) polymerase for RNA. Binds to poly(A) and to poly(G) with high affinity. May protect the poly(A) tail from degradation. This chain is Polyadenylate-binding protein 2-A (pabpn1-a), found in Xenopus laevis (African clawed frog).